Consider the following 661-residue polypeptide: Peroxisomal acyl-coenzyme A oxidase 1 (661 aa).

Serine 26 carries the phosphoserine modification. Lysine 65 carries the post-translational modification N6-acetyllysine. An N6-succinyllysine mark is found at lysine 89 and lysine 90. Position 139 (threonine 139) interacts with FAD. An N6-succinyllysine modification is found at lysine 159. Position 178 (glycine 178) interacts with FAD. The residue at position 216 (lysine 216) is an N6-acetyllysine. Lysine 241 bears the N6-succinyllysine mark. N6-acetyllysine occurs at positions 255, 267, and 272. At lysine 349 the chain carries N6-succinyllysine. Glutamate 421 functions as the Proton acceptor in the catalytic mechanism. 2 positions are modified to N6-acetyllysine; alternate: lysine 437 and lysine 446. N6-succinyllysine; alternate is present on residues lysine 437 and lysine 446. Position 500 is an N6-acetyllysine (lysine 500). Lysine 512 carries the post-translational modification N6-acetyllysine; alternate. Position 512 is an N6-succinyllysine; alternate (lysine 512). N6-succinyllysine is present on lysine 542. N6-acetyllysine; alternate is present on lysine 637. Lysine 637 carries the N6-succinyllysine; alternate modification. Lysine 643 is modified (N6-succinyllysine). Serine 649 carries the phosphoserine modification. Lysine 652 carries the post-translational modification N6-acetyllysine. An N6-succinyllysine modification is found at lysine 655. Positions 659–661 (SKL) match the Microbody targeting signal motif.

The protein belongs to the acyl-CoA oxidase family. As to quaternary structure, homodimer. Interacts with LONP2. Requires FAD as cofactor. In terms of tissue distribution, highest levels of isoform 1 are found in liver and kidney while highest levels of isoform 2 are found in white adipose tissue. Isoform 1 is expressed at higher levels than isoform 2 in liver and kidney while isoform 2 is expressed at higher levels in brain, heart, lung, muscle, white adipose tissue and testis.

The protein resides in the peroxisome. It catalyses the reaction a 2,3-saturated acyl-CoA + O2 = a (2E)-enoyl-CoA + H2O2. The catalysed reaction is hexadecanoyl-CoA + O2 = (2E)-hexadecenoyl-CoA + H2O2. The enzyme catalyses dodecanoyl-CoA + O2 = (2E)-dodecenoyl-CoA + H2O2. It carries out the reaction octanoyl-CoA + O2 = (2E)-octenoyl-CoA + H2O2. It catalyses the reaction decanoyl-CoA + O2 = (2E)-decenoyl-CoA + H2O2. The catalysed reaction is tetradecanoyl-CoA + O2 = (2E)-tetradecenoyl-CoA + H2O2. The enzyme catalyses hexadecanedioyl-CoA + O2 = (2E)-hexadecenedioyl-CoA + H2O2. It carries out the reaction tetracosanoyl-CoA + O2 = (2E)-tetracosenoyl-CoA + H2O2. It catalyses the reaction glutaryl-CoA + O2 = (2E)-glutaconyl-CoA + H2O2. The catalysed reaction is hexanoyl-CoA + O2 = (2E)-hexenoyl-CoA + H2O2. The enzyme catalyses octadecanoyl-CoA + O2 = (2E)-octadecenoyl-CoA + H2O2. It carries out the reaction (5Z,8Z,11Z,14Z,17Z)-eicosapentaenoyl-CoA + O2 = (2E,5Z,8Z,11Z,14Z,17Z)-icosahexaenoyl-CoA + H2O2. It catalyses the reaction (6Z,9Z,12Z,15Z,18Z,21Z)-tetracosahexaenoyl-CoA + O2 = (2E,6Z,9Z,12Z,15Z,18Z,21Z)-tetracosaheptaenoyl-CoA + H2O2. It participates in lipid metabolism; peroxisomal fatty acid beta-oxidation. Functionally, involved in the initial and rate-limiting step of peroxisomal beta-oxidation of straight-chain saturated and unsaturated very-long-chain fatty acids. Catalyzes the desaturation of fatty acyl-CoAs such as palmitoyl-CoA (hexadecanoyl-CoA) to 2-trans-enoyl-CoAs ((2E)-enoyl-CoAs) such as (2E)-hexadecenoyl-CoA, and donates electrons directly to molecular oxygen (O(2)), thereby producing hydrogen peroxide (H(2)O(2)). In terms of biological role, shows highest activity against medium-chain fatty acyl-CoAs. Shows optimum activity with a chain length of 10 carbons (decanoyl-CoA) in vitro. Its function is as follows. Is active against a much broader range of substrates and shows activity towards long-chain acyl-CoAs. This Mus musculus (Mouse) protein is Peroxisomal acyl-coenzyme A oxidase 1.